Reading from the N-terminus, the 238-residue chain is Orotidine 5'-phosphate decarboxylase (238 aa).

Substrate-binding positions include aspartate 10, lysine 32, 59–68, threonine 122, arginine 184, glutamine 193, glycine 213, and arginine 214; that span reads DLKLHDIPNT. Lysine 61 (proton donor) is an active-site residue.

Belongs to the OMP decarboxylase family. Type 1 subfamily. As to quaternary structure, homodimer.

The catalysed reaction is orotidine 5'-phosphate + H(+) = UMP + CO2. It functions in the pathway pyrimidine metabolism; UMP biosynthesis via de novo pathway; UMP from orotate: step 2/2. Its function is as follows. Catalyzes the decarboxylation of orotidine 5'-monophosphate (OMP) to uridine 5'-monophosphate (UMP). This is Orotidine 5'-phosphate decarboxylase from Bacillus cereus (strain ZK / E33L).